Consider the following 279-residue polypeptide: Calcium-binding protein 4 (279 aa).

A compositionally biased stretch (basic and acidic residues) spans 1–12 (MAEEQGRGRHGP). Residues 1-114 (MAEEQGRGRH…PGPQHDAAQR (114 aa)) are disordered. S42 carries the phosphoserine modification. Residues 55–65 (GPSSSGEQTPM) are compositionally biased toward polar residues. EF-hand domains follow at residues 133 to 168 (EELD…LGYM), 187 to 204 (GRVD…KLRE), 210 to 245 (LGLR…LLGE), and 247 to 279 (LVGP…LSRH). Ca(2+) contacts are provided by D146, D148, D150, Y152, and D157. Residues D223, D225, D227, R229, E234, D260, N262, D264, T266, and E271 each contribute to the Ca(2+) site.

Interacts with CACNA1F and CACNA1D (via IQ domain) in a calcium independent manner. Interacts (via N-terminus) with UNC119. In terms of processing, phosphorylated. Phosphorylation levels change with the light conditions and regulate the activity. As to expression, expressed in the retina.

The protein localises to the cytoplasm. The protein resides in the presynapse. Functionally, may play a role in normal synaptic function, probably through regulation of Ca(2+) influx and neurotransmitter release in photoreceptor synaptic terminals and in auditory transmission. Modulator of CACNA1F, shifting the activation range to more hyperpolarized voltages. This chain is Calcium-binding protein 4 (CABP4), found in Bos taurus (Bovine).